The following is a 395-amino-acid chain: Flap endonuclease 1 (395 aa).

Residues 1 to 104 (MGIKHLYQII…GELAKRFMRK (104 aa)) are N-domain. Asp-34 is a Mg(2+) binding site. 2 residues coordinate DNA: Arg-47 and Arg-70. Mg(2+) contacts are provided by Asp-86, Glu-158, Glu-160, Asp-179, and Asp-181. Positions 122-253 (EVEKFSRRTV…NTALKLIRDH (132 aa)) are I-domain. Residue Glu-158 coordinates DNA. Residues Gly-231 and Asp-233 each coordinate DNA. Asp-233 serves as a coordination point for Mg(2+). The tract at residues 341-349 (QQSRLEGFF) is interaction with PCNA. Residues 360–389 (AVLKRKHEEKLELQKKKKKEDSKAKKEAKS) show a composition bias toward basic and acidic residues. Residues 360–395 (AVLKRKHEEKLELQKKKKKEDSKAKKEAKSKPRGTT) are disordered.

Belongs to the XPG/RAD2 endonuclease family. FEN1 subfamily. As to quaternary structure, interacts with PCNA. Three molecules of FEN1 bind to one PCNA trimer with each molecule binding to one PCNA monomer. PCNA stimulates the nuclease activity without altering cleavage specificity. Mg(2+) is required as a cofactor. Phosphorylated. Phosphorylation upon DNA damage induces relocalization to the nuclear plasma.

The protein resides in the nucleus. The protein localises to the nucleolus. It is found in the nucleoplasm. It localises to the mitochondrion. Structure-specific nuclease with 5'-flap endonuclease and 5'-3' exonuclease activities involved in DNA replication and repair. During DNA replication, cleaves the 5'-overhanging flap structure that is generated by displacement synthesis when DNA polymerase encounters the 5'-end of a downstream Okazaki fragment. It enters the flap from the 5'-end and then tracks to cleave the flap base, leaving a nick for ligation. Also involved in the long patch base excision repair (LP-BER) pathway, by cleaving within the apurinic/apyrimidinic (AP) site-terminated flap. Acts as a genome stabilization factor that prevents flaps from equilibrating into structures that lead to duplications and deletions. Also possesses 5'-3' exonuclease activity on nicked or gapped double-stranded DNA, and exhibits RNase H activity. Also involved in replication and repair of rDNA and in repairing mitochondrial DNA. The chain is Flap endonuclease 1 from Ajellomyces capsulatus (strain H143) (Darling's disease fungus).